Consider the following 174-residue polypeptide: Methylated-DNA--protein-cysteine methyltransferase (174 aa).

The active-site Nucleophile; methyl group acceptor is Cys-141.

Belongs to the MGMT family.

Its subcellular location is the cytoplasm. It catalyses the reaction a 6-O-methyl-2'-deoxyguanosine in DNA + L-cysteinyl-[protein] = S-methyl-L-cysteinyl-[protein] + a 2'-deoxyguanosine in DNA. The enzyme catalyses a 4-O-methyl-thymidine in DNA + L-cysteinyl-[protein] = a thymidine in DNA + S-methyl-L-cysteinyl-[protein]. Its function is as follows. Involved in the cellular defense against the biological effects of O6-methylguanine (O6-MeG) and O4-methylthymine (O4-MeT) in DNA. Repairs the methylated nucleobase in DNA by stoichiometrically transferring the methyl group to a cysteine residue in the enzyme. This is a suicide reaction: the enzyme is irreversibly inactivated. This is Methylated-DNA--protein-cysteine methyltransferase from Thermococcus gammatolerans (strain DSM 15229 / JCM 11827 / EJ3).